The sequence spans 263 residues: Indole-3-glycerol phosphate synthase (263 aa).

This sequence belongs to the TrpC family.

The catalysed reaction is 1-(2-carboxyphenylamino)-1-deoxy-D-ribulose 5-phosphate + H(+) = (1S,2R)-1-C-(indol-3-yl)glycerol 3-phosphate + CO2 + H2O. It functions in the pathway amino-acid biosynthesis; L-tryptophan biosynthesis; L-tryptophan from chorismate: step 4/5. This chain is Indole-3-glycerol phosphate synthase, found in Laribacter hongkongensis (strain HLHK9).